A 56-amino-acid chain; its full sequence is Large ribosomal subunit protein bL32 (56 aa).

A disordered region spans residues 1–37 (MAVQQNKKSRSRRDMRRSHDALTTAAVSVDKASGETH). A compositionally biased stretch (basic residues) spans 7 to 16 (KKSRSRRDMR).

It belongs to the bacterial ribosomal protein bL32 family.

The protein is Large ribosomal subunit protein bL32 of Haemophilus influenzae (strain PittEE).